The following is a 645-amino-acid chain: MPVITLPDGSQRSFSNPVTVMQVAEDIGPGLAKATVAGRIDGQLVDACELISDDAKLSIITGKDPEGVEIIRHSFAHLVGHAVKQLYPTAQMAIGPVIDEGFYYDIAYERPFTPDDLAAIEKRIAELVKTDYDVVKRMTPIAEARQQFVDRGESYKVALIDDMDESTKEVGLYYHEEYMDMCRGPHVPNTRVLRHFKLMKLAGAYWRGDSNNEMLQRIYGTAWNDKKELKGYLTRIEEAEKRDHRKLGKKLDLFHVQEEAPGMVFWHPKGWRLYQAVEQYMRQKQLDNNYQEVKTPQIVDRVLWEKSGHWGKYHENMFTTHSENRDYAVKPMNCPCHIQVYNQGLKSYRDLPFRMAEFGSCHRNEPSGALHGIMRVRNFVQDDGHIFVTEGQIQQEVSEFIDLLHEVYADFGFDNIVYRLSTRPEQRVGSDEVWDKAEKALSEALDSAGLDWEELPGEGAFYGPKIEFSLKDAIGRVWQCGTIQVDFSMPTRLGAQYVSEDGSRQTPVMLHRAIVGSLERFIGILIEDTEGAFPVWLAPEQVVIMNITDRQADYCSVLEKRLNSNGFRAKLDLRNEKIGFKIREHTLQRVPYMIVVGDKEVEQEQVAVRTRTGEDLGVMSISDFEGLLQQEIARRSRKQEVEIVL.

In terms of domain architecture, TGS spans 1–61 (MPVITLPDGS…SDDAKLSIIT (61 aa)). Residues 243-534 (DHRKLGKKLD…LIEDTEGAFP (292 aa)) form a catalytic region. The Zn(2+) site is built by Cys-334, His-385, and His-511.

The protein belongs to the class-II aminoacyl-tRNA synthetase family. In terms of assembly, homodimer. It depends on Zn(2+) as a cofactor.

It is found in the cytoplasm. It catalyses the reaction tRNA(Thr) + L-threonine + ATP = L-threonyl-tRNA(Thr) + AMP + diphosphate + H(+). Its function is as follows. Catalyzes the attachment of threonine to tRNA(Thr) in a two-step reaction: L-threonine is first activated by ATP to form Thr-AMP and then transferred to the acceptor end of tRNA(Thr). Also edits incorrectly charged L-seryl-tRNA(Thr). The chain is Threonine--tRNA ligase from Marinomonas sp. (strain MWYL1).